Reading from the N-terminus, the 117-residue chain is DNA-directed RNA polymerase II subunit RPB11 (117 aa).

Position 1 is an N-acetylmethionine (methionine 1).

The protein belongs to the archaeal Rpo11/eukaryotic RPB11/RPC19 RNA polymerase subunit family. As to quaternary structure, component of the RNA polymerase II (Pol II) core complex consisting of 12 subunits: a ten-subunit catalytic core composed of POLR2A/RPB1, POLR2B/RPB2, POLR2C/RPB3, POLR2I/RPB9, POLR2J/RPB11, POLR2E/RPABC1, POLR2F/RPABC2, POLR2H/RPABC3, POLR2K/RPABC4 and POLR2L/RPABC5 and a mobile stalk composed of two subunits POLR2D/RPB4 and POLR2G/RPB7, protruding from the core and functioning primarily in transcription initiation. Part of Pol II(G) complex, in which Pol II core associates with an additional subunit POLR2M; unlike conventional Pol II, Pol II(G) functions as a transcriptional repressor. Part of TBP-based Pol II pre-initiation complex (PIC), in which Pol II core assembles with general transcription factors and other specific initiation factors including GTF2E1, GTF2E2, GTF2F1, GTF2F2, TCEA1, ERCC2, ERCC3, GTF2H2, GTF2H3, GTF2H4, GTF2H5, GTF2A1, GTF2A2, GTF2B and TBP; this large multi-subunit PIC complex mediates DNA unwinding and targets Pol II core to the transcription start site where the first phosphodiester bond forms. Interacts with AATF. Interacts with PTPN6; this interaction promotes the recruitment of RNA pol II to the PCK1 promoter.

It localises to the nucleus. In terms of biological role, core component of RNA polymerase II (Pol II), a DNA-dependent RNA polymerase which synthesizes mRNA precursors and many functional non-coding RNAs using the four ribonucleoside triphosphates as substrates. In Mus musculus (Mouse), this protein is DNA-directed RNA polymerase II subunit RPB11 (Polr2j).